Here is a 353-residue protein sequence, read N- to C-terminus: Uroporphyrinogen decarboxylase (353 aa).

Substrate contacts are provided by residues 27-31, phenylalanine 46, aspartate 76, tyrosine 152, serine 207, and histidine 321; that span reads RQAGR.

The protein belongs to the uroporphyrinogen decarboxylase family. Homodimer.

It is found in the cytoplasm. The enzyme catalyses uroporphyrinogen III + 4 H(+) = coproporphyrinogen III + 4 CO2. It participates in porphyrin-containing compound metabolism; protoporphyrin-IX biosynthesis; coproporphyrinogen-III from 5-aminolevulinate: step 4/4. In terms of biological role, catalyzes the decarboxylation of four acetate groups of uroporphyrinogen-III to yield coproporphyrinogen-III. In Listeria monocytogenes serovar 1/2a (strain ATCC BAA-679 / EGD-e), this protein is Uroporphyrinogen decarboxylase.